We begin with the raw amino-acid sequence, 311 residues long: Aldose reductase B (311 aa).

An NADP(+)-binding site is contributed by 13 to 23 (DIHHIPMIGLG). Tyrosine 54 serves as the catalytic Proton donor. Histidine 116 contacts substrate. 219 to 273 (SPLGQGKCDLLSNETLKSIADKHNKTVANVIFKWLNQRGIVTIPKSSNPARIIEN) contributes to the NADP(+) binding site.

It belongs to the aldo/keto reductase family.

It catalyses the reaction an alditol + NAD(+) = an aldose + NADH + H(+). The catalysed reaction is an alditol + NADP(+) = an aldose + NADPH + H(+). Catalyzes the NADPH-dependent reduction of a wide variety of carbonyl-containing compounds to their corresponding alcohols with a broad range of catalytic efficiencies. In Dictyostelium discoideum (Social amoeba), this protein is Aldose reductase B (alrB).